A 410-amino-acid polypeptide reads, in one-letter code: Acetate kinase (410 aa).

N7 serves as a coordination point for Mg(2+). Residue K14 participates in ATP binding. Substrate is bound at residue R88. Catalysis depends on D145, which acts as the Proton donor/acceptor. ATP-binding positions include 203–207 (HAGNG), 278–280 (DTR), and 326–330 (GIGEN). E379 contacts Mg(2+).

This sequence belongs to the acetokinase family. As to quaternary structure, homodimer. It depends on Mg(2+) as a cofactor. Requires Mn(2+) as cofactor.

It localises to the cytoplasm. The enzyme catalyses acetate + ATP = acetyl phosphate + ADP. It functions in the pathway metabolic intermediate biosynthesis; acetyl-CoA biosynthesis; acetyl-CoA from acetate: step 1/2. Catalyzes the formation of acetyl phosphate from acetate and ATP. Can also catalyze the reverse reaction. The protein is Acetate kinase of Aster yellows witches'-broom phytoplasma (strain AYWB).